Reading from the N-terminus, the 152-residue chain is Transcriptional regulator MraZ (152 aa).

2 consecutive SpoVT-AbrB domains span residues 5–52 and 81–124; these read ATLV…PLPE and ASEC…DETT.

This sequence belongs to the MraZ family. As to quaternary structure, forms oligomers.

It is found in the cytoplasm. Its subcellular location is the nucleoid. Its function is as follows. Negatively regulates its own expression and that of the subsequent genes in the proximal part of the division and cell wall (dcw) gene cluster. Acts by binding directly to DNA. May also regulate the expression of genes outside the dcw cluster. The sequence is that of Transcriptional regulator MraZ from Shigella flexneri serotype 5b (strain 8401).